A 5005-amino-acid chain; its full sequence is Bridge-like lipid transfer protein family member 1 (5005 aa).

Residues 26–46 traverse the membrane as a helical segment; it reads NVVWLLVATILSCGWIIYLTY. Disordered regions lie at residues 691-721, 1218-1257, and 1269-1310; these read LRPSQKTSDRVVSSPSTSSRPPIDPSELPPD, LSLQVPLRSHSSSSSSEENSSSSAAQPLLAGEKESPSSVA, and GTKR…LKRQ. 2 stretches are compositionally biased toward low complexity: residues 700–711 and 1226–1240; these read RVVSSPSTSSRP and SHSSSSSSEENSSSS. The segment covering 1248–1257 has biased composition (basic and acidic residues); it reads GEKESPSSVA. Residues 1278–1303 show a composition bias toward polar residues; that stretch reads SIPTEISGNSPVSPNTQDKSVGQSPL. 3 positions are modified to phosphoserine: Ser-1301, Ser-1305, and Ser-1323. Thr-1325 is subject to Phosphothreonine. Disordered stretches follow at residues 1343-1376, 1400-1427, 1521-1548, and 1676-1704; these read SDVSRSDENVLDSPKQRRSFGSFPYTPSADSNSF, EFEPISSDEGPGTYPGRKKKKKQTQQID, TNKRTSKSSLHRPLDLDTPTSEESSSSF, and FSENLSSKQDIRGTKTEQSTIGTTNQGQA. Phosphoserine is present on residues Ser-1355 and Ser-1406. Basic residues predominate over residues 1521–1530; that stretch reads TNKRTSKSSL. The segment covering 1691–1704 has biased composition (polar residues); that stretch reads TEQSTIGTTNQGQA. A phosphoserine mark is found at Ser-1805 and Ser-1808. Disordered regions lie at residues 1924 to 1991, 2401 to 2420, and 2598 to 2677; these read DTER…PLMP, SDQNTLDGTHSQHSTSQDDV, and TAGS…KDVV. Polar residues-rich tracts occupy residues 1931-1948, 1959-1971, 2401-2418, and 2598-2608; these read LTSNNSSDSPTGSGYNTD, TSPSSDLNGNSVS, SDQNTLDGTHSQHSTSQD, and TAGSASPTPTF. Phosphoserine occurs at positions 2601 and 2603. The segment covering 2619–2638 has biased composition (low complexity); it reads SDFSRSSRGSLNGGNRVNNA. Over residues 2643–2665 the composition is skewed to basic and acidic residues; the sequence is TNNENNKKESRNKNSLGRSERRT. Ser-2755 is subject to Phosphoserine. A disordered region spans residues 2928–2967; sequence RQPSTAPQPVKEDIATPLPSEKTPTSVNQTPVETNEFPQL. Residues 2949–2964 show a composition bias toward polar residues; that stretch reads KTPTSVNQTPVETNEF. A Phosphoserine modification is found at Ser-3562. Positions 3612–3622 are enriched in polar residues; it reads PSYSRSKSISA. Disordered regions lie at residues 3612-3661, 3686-3744, 3821-3843, 3914-3954, 4088-4146, and 4325-4394; these read PSYS…VTFN, SSNS…ERFY, RRSYDRSSRSLDQDSPSKKKKFQ, YGMK…KGKG, GTTY…SSSS, and QSAS…KAAS. Phosphoserine is present on Ser-3653. A compositionally biased stretch (polar residues) spans 3686-3700; that stretch reads SSNSEGSCSVFSSPK. Residues 3727–3736 are compositionally biased toward acidic residues; it reads EDSEKDEKDE. Over residues 3821 to 3837 the composition is skewed to basic and acidic residues; the sequence is RRSYDRSSRSLDQDSPS. Composition is skewed to polar residues over residues 3931 to 3940 and 4098 to 4113; these read TVQSKTNTLL and PGGNATQSGTKTSASK. Residues 4122–4146 show a composition bias toward low complexity; sequence LGSPLGRSRHSSSQSDLTSSSSSSS. The residue at position 4124 (Ser-4124) is a Phosphoserine. Over residues 4325 to 4358 the composition is skewed to polar residues; that stretch reads QSASFTHMPQSPNVFNEHMTNSTMSPGTVGQSLK. Residues 4359 to 4372 show a composition bias toward low complexity; the sequence is SPASIRSRSVSDSS. Residues 4381–4394 are compositionally biased toward polar residues; that stretch reads KTSTPFNKSNKAAS.

Highly expressed in testis and ovary. Weakly or not expressed in other tissues.

It localises to the cell membrane. The protein localises to the endoplasmic reticulum membrane. The protein resides in the mitochondrion membrane. Its function is as follows. Tube-forming lipid transport protein which provides phosphatidylethanolamine for glycosylphosphatidylinositol (GPI) anchor synthesis in the endoplasmic reticulum. Plays a role in endosomal trafficking and endosome recycling. Also involved in the actin cytoskeleton and cilia structural dynamics. Acts as a regulator of phagocytosis. The polypeptide is Bridge-like lipid transfer protein family member 1 (Homo sapiens (Human)).